Reading from the N-terminus, the 154-residue chain is MRCPYCRHPDSRVVDSREADDGQLIRRRRSCPECGKRFTTVEEAVLAVVKRSGVTEPFSRTKIIGGVRKACQGRPVDDDSIALLAQKVEETVRAKGAAELPSHEVGLAILGPLRDLDEVAYLRFASVYRSFESLADFEREIETLRTAAQTRGGG.

A zinc finger spans residues 3–34; the sequence is CPYCRHPDSRVVDSREADDGQLIRRRRSCPEC. Residues 46-136 enclose the ATP-cone domain; sequence LAVVKRSGVT…VYRSFESLAD (91 aa).

It belongs to the NrdR family. Requires Zn(2+) as cofactor.

Its function is as follows. Negatively regulates transcription of bacterial ribonucleotide reductase nrd genes and operons by binding to NrdR-boxes. This Salinispora arenicola (strain CNS-205) protein is Transcriptional repressor NrdR.